Here is a 1292-residue protein sequence, read N- to C-terminus: Zinc finger protein 423 (1292 aa).

Over residues 1–11 (MSRRKQAKPRS) the composition is skewed to basic residues. Disordered regions lie at residues 1 to 21 (MSRR…EASD), 33 to 70 (AGGL…EDVE), and 95 to 125 (AHRC…SPTQ). A compositionally biased stretch (basic and acidic residues) spans 41–54 (ECDRKTSRALEDRN). S55 and S58 each carry phosphoserine. A C2H2-type 1; degenerate zinc finger spans residues 75-101 (YTCDHCQQDFESLADLTDHRAHRCPGD). Polar residues predominate over residues 110-125 (WVASSPSSKDVASPTQ). 7 C2H2-type zinc fingers span residues 146–168 (YPCQ…EQIH), 174–196 (FKCT…IKLH), 202–224 (YHCH…LKTH), 230–252 (FKCS…MQAH), 271–294 (FMCD…LTLH), 303–326 (LQCI…HQAH), and 331–353 (HKCP…LDSH). The interval 354 to 407 (RQPDSSNHSVSPDPVLGSVASMSSATPDSSASVERGSTPDSTLKPLRGQKKMRD) is disordered. A compositionally biased stretch (low complexity) spans 371 to 385 (SVASMSSATPDSSAS). The C2H2-type 9; degenerate zinc finger occupies 417–441 (YSCPYCSKRDFTSLAVLEIHLKTIH). 3 consecutive C2H2-type zinc fingers follow at residues 449-472 (HTCQ…RKLH), 488-511 (FHCN…RVSH), and 525-548 (FFCN…QQAH). The C2H2-type 13; atypical zinc-finger motif lies at 571–596 (YSCPYCTNSPIFGSILKLTKHIKENH). Residues 598–635 (NIPLAHSKKSKAEQSPVSSDVEVSSPKRQRLSGSANSI) are disordered. S612 is subject to Phosphoserine. The segment covering 612 to 623 (SPVSSDVEVSSP) has biased composition (low complexity). C2H2-type zinc fingers lie at residues 640–662 (YPCN…LKLH), 670–692 (QACP…LTVH), 700–723 (YVCE…LDMH), 728–751 (YHCT…AVKH), 758–781 (YRCT…KHSH), 789–811 (HKCI…ITTH), and 815–838 (YNCR…REKH). The C2H2-type 21; degenerate zinc-finger motif lies at 894–916 (YGCDICGAAYTMEVLLQNHRLRD). 3 consecutive C2H2-type zinc fingers follow at residues 938–960 (HKCN…LQTH), 967–989 (YMCP…KVTH), and 1028–1050 (FRCV…GTFH). At S1062 the chain carries Phosphoserine. A C2H2-type 25; degenerate zinc finger spans residues 1072 to 1090 (YKCALCLKEFRSKQDLVRL). 5 consecutive C2H2-type zinc fingers follow at residues 1128–1151 (LRCP…QVDH), 1176–1198 (YQCI…VANH), 1206–1228 (HECK…LIEH), 1237–1260 (FKCP…FAVH), and 1267–1290 (YDCS…MSQH). The span at 1144-1155 (ESHMQVDHRDLT) shows a compositional bias: basic and acidic residues. A disordered region spans residues 1144–1171 (ESHMQVDHRDLTPETSGPRKGAQTSPVP).

This sequence belongs to the krueppel C2H2-type zinc-finger protein family. In terms of assembly, homodimer. Interacts with SMAD1 and SMAD4. Interacts with EBF1. Interacts with PARP1. Interacts with CEP290. In terms of tissue distribution, within the cerebellum, Zfp423 is expressed in both ventricular and external germinal zones. Transiently expressed in newly differentiating olfactory-receptor neurons.

The protein localises to the nucleus. Functionally, transcription factor that can both act as an activator or a repressor depending on the context. Plays a central role in BMP signaling and olfactory neurogenesis. Associates with SMADs in response to BMP2 leading to activate transcription of BMP target genes. Acts as a transcriptional repressor via its interaction with EBF1, a transcription factor involved in terminal olfactory receptor neurons differentiation; this interaction preventing EBF1 to bind DNA and activate olfactory-specific genes. Involved in olfactory neurogenesis by participating in a developmental switch that regulates the transition from differentiation to maturation in olfactory receptor neurons. Controls proliferation and differentiation of neural precursors in cerebellar vermis formation. The protein is Zinc finger protein 423 (Znf423) of Mus musculus (Mouse).